The sequence spans 861 residues: DNA mismatch repair protein MutS (861 aa).

617–624 (GPNMGGKS) provides a ligand contact to ATP. The tract at residues 799-822 (ETTSLPHEQPPAAKAKDAPQVPHQ) is disordered. Positions 808–820 (PPAAKAKDAPQVP) are enriched in low complexity.

This sequence belongs to the DNA mismatch repair MutS family.

This protein is involved in the repair of mismatches in DNA. It is possible that it carries out the mismatch recognition step. This protein has a weak ATPase activity. The sequence is that of DNA mismatch repair protein MutS from Pseudomonas putida (strain GB-1).